A 750-amino-acid chain; its full sequence is Photosystem I P700 chlorophyll a apoprotein A1 (750 aa).

8 helical membrane passes run 70 to 93 (VFSA…FHGA), 156 to 179 (LYCT…FHYH), 195 to 219 (LNHH…HVSL), 291 to 309 (IAHH…GHMY), 346 to 369 (WHAQ…HHMY), 385 to 411 (LSLF…IFMV), 433 to 455 (AIIS…LYIH), and 531 to 549 (FLVH…LILL). Residues C573 and C582 each contribute to the [4Fe-4S] cluster site. Transmembrane regions (helical) follow at residues 589–610 (HVFL…HFSW) and 664–686 (LSAY…MFLF). Chlorophyll a' is bound at residue H675. Chlorophyll a-binding residues include M683 and Y691. W692 lines the phylloquinone pocket. The helical transmembrane segment at 724 to 744 (AVGVTHYLLGGIATTWAFFLA) threads the bilayer.

The protein belongs to the PsaA/PsaB family. As to quaternary structure, the PsaA/B heterodimer binds the P700 chlorophyll special pair and subsequent electron acceptors. PSI consists of a core antenna complex that captures photons, and an electron transfer chain that converts photonic excitation into a charge separation. The eukaryotic PSI reaction center is composed of at least 11 subunits. The cofactor is P700 is a chlorophyll a/chlorophyll a' dimer, A0 is one or more chlorophyll a, A1 is one or both phylloquinones and FX is a shared 4Fe-4S iron-sulfur center..

The protein localises to the plastid. It is found in the chloroplast thylakoid membrane. It catalyses the reaction reduced [plastocyanin] + hnu + oxidized [2Fe-2S]-[ferredoxin] = oxidized [plastocyanin] + reduced [2Fe-2S]-[ferredoxin]. PsaA and PsaB bind P700, the primary electron donor of photosystem I (PSI), as well as the electron acceptors A0, A1 and FX. PSI is a plastocyanin-ferredoxin oxidoreductase, converting photonic excitation into a charge separation, which transfers an electron from the donor P700 chlorophyll pair to the spectroscopically characterized acceptors A0, A1, FX, FA and FB in turn. Oxidized P700 is reduced on the lumenal side of the thylakoid membrane by plastocyanin. The protein is Photosystem I P700 chlorophyll a apoprotein A1 of Nymphaea alba (White water-lily).